A 308-amino-acid polypeptide reads, in one-letter code: Methionine synthase (308 aa).

The Zn(2+) site is built by histidine 192, cysteine 194, glutamate 215, and cysteine 282.

It belongs to the archaeal MetE family. Zn(2+) serves as cofactor.

Its pathway is amino-acid biosynthesis; L-methionine biosynthesis via de novo pathway. Functionally, catalyzes the transfer of a methyl group to L-homocysteine resulting in methionine formation. Can use methylcobalamin and methylcobinamide as methyl donors, but methylcobalamin is not considered to be the physiological substrate. This Methanocaldococcus jannaschii (strain ATCC 43067 / DSM 2661 / JAL-1 / JCM 10045 / NBRC 100440) (Methanococcus jannaschii) protein is Methionine synthase.